A 702-amino-acid polypeptide reads, in one-letter code: Polyribonucleotide nucleotidyltransferase 2 (702 aa).

The Mg(2+) site is built by D483 and D489. Residues 550–609 form the KH domain; that stretch reads PQVTKLKVHPDKVREVIGAGGKVINKIIDETGVKINIENDGTIYIAAPDQESARVALEMI. Residues 619-687 form the S1 motif domain; the sequence is GEVYTGKVIK…PQGKIGLSRK (69 aa).

This sequence belongs to the polyribonucleotide nucleotidyltransferase family. Requires Mg(2+) as cofactor.

The protein localises to the cytoplasm. The catalysed reaction is RNA(n+1) + phosphate = RNA(n) + a ribonucleoside 5'-diphosphate. Functionally, involved in mRNA degradation. Catalyzes the phosphorolysis of single-stranded polyribonucleotides processively in the 3'- to 5'-direction. This Alkaliphilus metalliredigens (strain QYMF) protein is Polyribonucleotide nucleotidyltransferase 2.